A 327-amino-acid chain; its full sequence is Phenylalanine--tRNA ligase alpha subunit (327 aa).

Glu-252 contacts Mg(2+).

This sequence belongs to the class-II aminoacyl-tRNA synthetase family. Phe-tRNA synthetase alpha subunit type 1 subfamily. As to quaternary structure, tetramer of two alpha and two beta subunits. Mg(2+) serves as cofactor.

It localises to the cytoplasm. It carries out the reaction tRNA(Phe) + L-phenylalanine + ATP = L-phenylalanyl-tRNA(Phe) + AMP + diphosphate + H(+). This Shewanella sp. (strain MR-7) protein is Phenylalanine--tRNA ligase alpha subunit.